We begin with the raw amino-acid sequence, 395 residues long: Mevalonate kinase (395 aa).

Residues lysine 13, asparagine 55, asparagine 104, serine 135, and 140–146 each bind ATP; that span reads GAGLGSS. Serine 146 acts as the Proton donor in catalysis. Residues serine 146 and glutamate 193 each coordinate Mg(2+). The active-site Proton acceptor is aspartate 204.

The protein belongs to the GHMP kinase family. Mevalonate kinase subfamily. As to quaternary structure, homodimer. The cofactor is Mg(2+).

Its subcellular location is the cytoplasm. It localises to the peroxisome. It carries out the reaction (R)-mevalonate + ATP = (R)-5-phosphomevalonate + ADP + H(+). It functions in the pathway isoprenoid biosynthesis; isopentenyl diphosphate biosynthesis via mevalonate pathway; isopentenyl diphosphate from (R)-mevalonate: step 1/3. With respect to regulation, farnesyl pyrophosphate and geranyl pyrophosphate inhibit mevalonate kinase activity by binding competitively at the ATP-binding sites. In terms of biological role, catalyzes the phosphorylation of mevalonate to mevalonate 5-phosphate, a key step in isoprenoid and cholesterol biosynthesis. The polypeptide is Mevalonate kinase (Mus musculus (Mouse)).